The chain runs to 256 residues: Chalcone--flavanone isomerase (256 aa).

Substrate-binding residues include Thr51, Asn116, and Ser193. A disordered region spans residues 219–256 (NSTTDLNESENEKLNSNEVSKEEKPLQVEKSAFKEVEV). Residues 228-256 (ENEKLNSNEVSKEEKPLQVEKSAFKEVEV) are compositionally biased toward basic and acidic residues.

Belongs to the chalcone isomerase family. As to expression, nodules.

It carries out the reaction a chalcone = a flavanone.. It functions in the pathway secondary metabolite biosynthesis; flavonoid biosynthesis. Its function is as follows. Catalyzes the intramolecular cyclization of bicyclic chalcones into tricyclic (S)-flavanones. Responsible for the isomerization of 4,2',4',6'-tetrahydroxychalcone (also termed chalcone) into naringenin. The protein is Chalcone--flavanone isomerase (CHI) of Elaeagnus umbellata (Autumn olive).